Reading from the N-terminus, the 493-residue chain is MSKKYVIALDQGTTSSRAIVFDHDANMVASSQREFGQIYPQPGWVEHDAMEIWASQSSTLIEALARADIHSEDVAAIGITNQRETTVIWDKMTGKPVYNAIVWQCRRSKAICDELKAQGLEEYVKDCTGLLLDPYFSGTKIKWILDNVEGVRERAEKGELLFGTIDTWLVWKLTEGKVHVTDPTNASRTLLFNIHQQAWDEKLLNALGIPRSLLPEVKPSSAIYGQTRIAGEGSSIAIAGIAGDQQSALFGQLCIDEGMAKNTYGTGCFLLMNTGTEAVKSQQGLLTTIAVGAKGEVNYALEGSVFMGGATIQWLRDELGLIRDAQDTEYFASKVENTNGVYLVPAFVGLGAPYWDPDARGALVGLTRGANRNHIIRAALEAIAYQSRDLLDAMSKDSGVELKQIKVDGGAVANDFLMQFQADITNVDVLRPELTETTAMGAAFLAGLAVGFWSSTAELKHKAGIERRFKPKINDAQRATLYDGWKEAVARTR.

Threonine 13 is an ADP binding site. 3 residues coordinate ATP: threonine 13, threonine 14, and serine 15. Position 13 (threonine 13) interacts with sn-glycerol 3-phosphate. Residue arginine 17 participates in ADP binding. Positions 83, 84, 135, and 244 each coordinate sn-glycerol 3-phosphate. Positions 83, 84, 135, 244, and 245 each coordinate glycerol. The ADP site is built by threonine 266 and glycine 309. Residues threonine 266, glycine 309, glutamine 313, and glycine 410 each contribute to the ATP site. Glycine 410 and asparagine 414 together coordinate ADP.

The protein belongs to the FGGY kinase family.

The catalysed reaction is glycerol + ATP = sn-glycerol 3-phosphate + ADP + H(+). The protein operates within polyol metabolism; glycerol degradation via glycerol kinase pathway; sn-glycerol 3-phosphate from glycerol: step 1/1. Inhibited by fructose 1,6-bisphosphate (FBP). In terms of biological role, key enzyme in the regulation of glycerol uptake and metabolism. Catalyzes the phosphorylation of glycerol to yield sn-glycerol 3-phosphate. The chain is Glycerol kinase from Shewanella piezotolerans (strain WP3 / JCM 13877).